Reading from the N-terminus, the 299-residue chain is Ribosomal RNA small subunit methyltransferase H (299 aa).

S-adenosyl-L-methionine is bound by residues Gly24–His26, Asp43, Phe68, Asp90, and Gln97.

It belongs to the methyltransferase superfamily. RsmH family.

Its subcellular location is the cytoplasm. The catalysed reaction is cytidine(1402) in 16S rRNA + S-adenosyl-L-methionine = N(4)-methylcytidine(1402) in 16S rRNA + S-adenosyl-L-homocysteine + H(+). Specifically methylates the N4 position of cytidine in position 1402 (C1402) of 16S rRNA. This is Ribosomal RNA small subunit methyltransferase H from Francisella tularensis subsp. tularensis (strain WY96-3418).